The chain runs to 963 residues: GPMGPSGPRGIPGPPGAPGPQGFASGPMGPRGPPGPPGKNGDDGEAGKPGRPGERGPPGPQGARGIPGTAGIPGMKGHRGFSGIDGAKGDAGPAGPKGEPGSPGENGAPGQMGPRGIPGERGRPGAPGPAGARGNDGATGAAGPPGPTGPAGPPGFPGAVGAKGEAGPQGARGSEGPQGVRGEPGPPGPAGAAGPAGNPGADGQPGAKGANGAPGIAGAPGFPGARGPSGPQGPSGPPGPKGNSGEPGAPGSKGDTGAKGEPGPTGIQGPPGPAGEEGKRGARGEPGPTGIPGPPGERGGPGARGFPGSDGVAGPKGPAGERGAPGPAGPKGSPGEAGRPGEAGIPGAKGITGSPGSPGPDGKTGPPGPAGQDGRPGPPGPPGARGQAGVMGFPGPKGAAGEPGKAGERGVPGPPGAVGPAGKDGEAGAQGPPGPAGPAGERGEQGPAGSPGIGAPGPSGARGERGFPGERGVQGPPGPAGPRGANGAPGNDGAKGIQGMPGERGAAGIPGPKGDRGDAGPKGADGSPGKDGVRGITGPIGPPGPAGAPGDKGESGPSGPAGPTGARGAPGDRGEPGPPGPAGFAGPPGADGQPGAKGEPGDAGAKGDAGPPGPAGPTGPPGPIGNVGAPGPKGARGSAGPPGATGFPGAAGRVGPPGPSGNAGPPGPPGPVGKEGGKGPRGETGPAGRPGEAGPPGPPGPAGEKGSPGADGPAGAPGTPGPQGIAGQRGVVGIPGQRGERGFPGIPGPSGEPGKQGPSGASGERGPPGPVGPPGIAGPPGESGREGAPGAEGSPGRDGSPGPKGDRGETGPAGPPGAPGAPGAPGPVGPAGKSGDRGETGPAGPAGPIGPVGARGPAGPQGPRGDKGETGEQGDRGIKGHRGFSGIQGPPGPPGSPGEQGPSGASGPAGPRGPPGSAGAPGKDGINGIPGPIGPPGPRGRTGDAGPVGPPGPPGPPGPPGPP.

The segment at 1–963 (GPMGPSGPRG…PGPPGPPGPP (963 aa)) is disordered. Positions 40–54 (NGDDGEAGKPGRPGE) are enriched in basic and acidic residues. Ser82 is modified (phosphoserine). 2 stretches are compositionally biased toward low complexity: residues 90–106 (DAGPAGPKGEPGSPGEN) and 129–142 (PAGARGNDGATGAA). Over residues 144–156 (PPGPTGPAGPPGF) the composition is skewed to pro residues. The segment covering 190-229 (AGAAGPAGNPGADGQPGAKGANGAPGIAGAPGFPGARGPS) has biased composition (low complexity). The segment covering 296 to 305 (GERGGPGARG) has biased composition (gly residues). Composition is skewed to low complexity over residues 313 to 337 (AGPKGPAGERGAPGPAGPKGSPGEA), 349 to 375 (KGITGSPGSPGPDGKTGPPGPAGQDGR), 384 to 403 (ARGQAGVMGFPGPKGAAGEP), 482 to 495 (PRGANGAPGNDGAK), 555 to 569 (SGPSGPAGPTGARGA), and 582 to 609 (AGFAGPPGADGQPGAKGEPGDAGAKGDA). Ser558 is modified (phosphoserine). Pro residues predominate over residues 611–623 (PPGPAGPTGPPGP). Composition is skewed to low complexity over residues 638–654 (SAGPPGATGFPGAAGRV), 683–692 (ETGPAGRPGE), and 702–726 (AGEKGSPGADGPAGAPGTPGPQGIA). Composition is skewed to pro residues over residues 767 to 777 (PPGPVGPPGIA) and 813 to 828 (AGPPGAPGAPGAPGPV). A compositionally biased stretch (low complexity) spans 849–863 (IGPVGARGPAGPQGP). Positions 864–878 (RGDKGETGEQGDRGI) are enriched in basic and acidic residues. Residues 897-930 (PGEQGPSGASGPAGPRGPPGSAGAPGKDGINGIP) are compositionally biased toward low complexity. Over residues 948-963 (VGPPGPPGPPGPPGPP) the composition is skewed to pro residues.

Belongs to the fibrillar collagen family. Trimers of one alpha 2(I) and two alpha 1(I) chains. Prolines at the third position of the tripeptide repeating unit (G-X-Y) are hydroxylated in some or all of the chains. As to expression, forms the fibrils of tendon, ligaments and bones. In bones, the fibrils are mineralized with calcium hydroxyapatite.

The protein localises to the secreted. It is found in the extracellular space. Its subcellular location is the extracellular matrix. Type I collagen is a member of group I collagen (fibrillar forming collagen). This is Collagen alpha-1(I) chain from Tapirus terrestris (Lowland tapir).